The sequence spans 953 residues: Translation initiation factor IF-2 (953 aa).

Residues glycine 55–tyrosine 340 are disordered. Residues lysine 81–alanine 93 show a composition bias toward low complexity. The span at proline 110 to lysine 119 shows a compositional bias: pro residues. Low complexity-rich tracts occupy residues serine 123–lysine 133 and lysine 143–proline 160. Gly residues predominate over residues proline 202–glycine 219. Positions glutamine 233–glutamine 248 are enriched in low complexity. Gly residues predominate over residues asparagine 280–glycine 323. Residues arginine 327–lysine 336 show a composition bias toward basic residues. Residues lysine 449 to aspartate 621 enclose the tr-type G domain. Residues glycine 458–threonine 465 are G1. Glycine 458–threonine 465 lines the GTP pocket. Residues glycine 483 to glycine 487 are G2. A G3 region spans residues aspartate 508–glycine 511. GTP contacts are provided by residues aspartate 508–histidine 512 and asparagine 562–aspartate 565. The segment at asparagine 562–aspartate 565 is G4. The tract at residues serine 598–lysine 600 is G5.

It belongs to the TRAFAC class translation factor GTPase superfamily. Classic translation factor GTPase family. IF-2 subfamily.

It is found in the cytoplasm. One of the essential components for the initiation of protein synthesis. Protects formylmethionyl-tRNA from spontaneous hydrolysis and promotes its binding to the 30S ribosomal subunits. Also involved in the hydrolysis of GTP during the formation of the 70S ribosomal complex. The protein is Translation initiation factor IF-2 of Corynebacterium diphtheriae (strain ATCC 700971 / NCTC 13129 / Biotype gravis).